The primary structure comprises 403 residues: CCA-adding enzyme (403 aa).

The ATP site is built by Gly-32 and Arg-35. Positions 32 and 35 each coordinate CTP. 2 residues coordinate Mg(2+): Asp-45 and Asp-47. Residues Arg-116, Asp-159, Arg-162, Arg-165, and Arg-168 each contribute to the ATP site. CTP-binding residues include Arg-116, Asp-159, Arg-162, Arg-165, and Arg-168.

This sequence belongs to the tRNA nucleotidyltransferase/poly(A) polymerase family. Bacterial CCA-adding enzyme type 3 subfamily. Homodimer. Mg(2+) serves as cofactor.

It catalyses the reaction a tRNA precursor + 2 CTP + ATP = a tRNA with a 3' CCA end + 3 diphosphate. The enzyme catalyses a tRNA with a 3' CCA end + 2 CTP + ATP = a tRNA with a 3' CCACCA end + 3 diphosphate. In terms of biological role, catalyzes the addition and repair of the essential 3'-terminal CCA sequence in tRNAs without using a nucleic acid template. Adds these three nucleotides in the order of C, C, and A to the tRNA nucleotide-73, using CTP and ATP as substrates and producing inorganic pyrophosphate. tRNA 3'-terminal CCA addition is required both for tRNA processing and repair. Also involved in tRNA surveillance by mediating tandem CCA addition to generate a CCACCA at the 3' terminus of unstable tRNAs. While stable tRNAs receive only 3'-terminal CCA, unstable tRNAs are marked with CCACCA and rapidly degraded. The polypeptide is CCA-adding enzyme (Leuconostoc citreum (strain KM20)).